An 875-amino-acid chain; its full sequence is Neurotrypsin (875 aa).

Positions 1-20 (MTLARFVLALVLGALPEVVX) are cleaved as a signal peptide. The N-linked (GlcNAc...) asparagine glycan is linked to asparagine 26. A disordered region spans residues 31–88 (HRPRHSPPTGPHYPYYLPTQQRPPRTRPPPPLPRFPRPPRALPAQRPHALQAGHTPRP). Residues 56-71 (TRPPPPLPRFPRPPRA) are compositionally biased toward pro residues. The 73-residue stretch at 93–165 (CPAGEPWVSV…GKVDWGYCDC (73 aa)) folds into the Kringle domain. 20 disulfides stabilise this stretch: cysteine 93/cysteine 165, cysteine 109/cysteine 149, cysteine 138/cysteine 163, cysteine 195/cysteine 259, cysteine 208/cysteine 269, cysteine 239/cysteine 249, cysteine 305/cysteine 369, cysteine 318/cysteine 379, cysteine 349/cysteine 359, cysteine 412/cysteine 475, cysteine 425/cysteine 485, cysteine 455/cysteine 465, cysteine 525/cysteine 589, cysteine 538/cysteine 599, cysteine 569/cysteine 579, cysteine 619/cysteine 750, cysteine 661/cysteine 677, cysteine 765/cysteine 831, cysteine 794/cysteine 808, and cysteine 821/cysteine 850. 4 SRCR domains span residues 170-271 (IRLR…TCSF), 280-381 (IRLV…SCTP), 387-487 (IRLA…ACYP), and 500-601 (VRLM…ICDY). The segment at 619-630 (CGLRLLHRRQKR) is zymogen activation region. In terms of domain architecture, Peptidase S1 spans 631-874 (IIGGKNSLRG…FVPWIKSVTK (244 aa)). Histidine 676 functions as the Charge relay system in the catalytic mechanism. Asparagine 683 carries an N-linked (GlcNAc...) asparagine glycan. Aspartate 726 functions as the Charge relay system in the catalytic mechanism. Serine 825 serves as the catalytic Charge relay system.

This sequence belongs to the peptidase S1 family.

The protein localises to the secreted. Its function is as follows. Plays a role in neuronal plasticity and the proteolytic action may subserve structural reorganizations associated with learning and memory operations. This chain is Neurotrypsin (PRSS12), found in Nomascus leucogenys (Northern white-cheeked gibbon).